The chain runs to 101 residues: Co-chaperonin GroES (101 aa).

This sequence belongs to the GroES chaperonin family. In terms of assembly, heptamer of 7 subunits arranged in a ring. Interacts with the chaperonin GroEL.

The protein localises to the cytoplasm. In terms of biological role, together with the chaperonin GroEL, plays an essential role in assisting protein folding. The GroEL-GroES system forms a nano-cage that allows encapsulation of the non-native substrate proteins and provides a physical environment optimized to promote and accelerate protein folding. GroES binds to the apical surface of the GroEL ring, thereby capping the opening of the GroEL channel. The sequence is that of Co-chaperonin GroES from Lawsonia intracellularis.